A 278-amino-acid chain; its full sequence is Extracellular metalloprotease MCYG_03238 (278 aa).

Residues 1 to 19 form the signal peptide; sequence MRFSIVLSSIAALSSVAAA. Residue Asn-52 is glycosylated (N-linked (GlcNAc...) asparagine). His-170 provides a ligand contact to Zn(2+). The active site involves Glu-171. Residue His-174 coordinates Zn(2+). A disulfide bridge connects residues Cys-209 and Cys-255.

This sequence belongs to the peptidase M43B family.

The protein localises to the secreted. Its function is as follows. Secreted metalloproteinase that allows assimilation of proteinaceous substrates. Plays a pivotal role as a pathogenicity determinant during infections and contributes to the ability of the pathogen to persist within the mammalian host. In Arthroderma otae (strain ATCC MYA-4605 / CBS 113480) (Microsporum canis), this protein is Extracellular metalloprotease MCYG_03238.